Consider the following 85-residue polypeptide: UPF0386 protein RL2079 (85 aa).

This sequence belongs to the UPF0386 family.

This Rhizobium johnstonii (strain DSM 114642 / LMG 32736 / 3841) (Rhizobium leguminosarum bv. viciae) protein is UPF0386 protein RL2079.